A 486-amino-acid polypeptide reads, in one-letter code: CUGBP Elav-like family member 5 (486 aa).

Basic and acidic residues predominate over residues 1-11; that stretch reads MARLTEREARR. The segment at 1-39 is disordered; that stretch reads MARLTEREARRQQQQHPPQQQQPRACPMSGPEPPAQQSD. The span at 12–24 shows a compositional bias: low complexity; that stretch reads QQQQHPPQQQQPR. RRM domains lie at 47–128, 135–215, and 401–479; these read IKLF…PADS, RKLF…FADT, and CNLF…LKRP.

The protein belongs to the CELF/BRUNOL family.

It localises to the nucleus. It is found in the cytoplasm. In terms of biological role, RNA-binding protein that may be implicated in the regulation of pre-mRNA alternative splicing. The protein is CUGBP Elav-like family member 5 (celf5) of Xenopus tropicalis (Western clawed frog).